The primary structure comprises 197 residues: Adrenodoxin-like protein 2, mitochondrial (197 aa).

Residues 1 to 74 (MVFHRLSRLG…TSFSTTSEKG (74 aa)) constitute a mitochondrion transit peptide. A 2Fe-2S ferredoxin-type domain is found at 81-184 (INVTFVDKDG…GVRLAIPSAT (104 aa)). Cys118, Cys124, Cys127, and Cys165 together coordinate [2Fe-2S] cluster.

It belongs to the adrenodoxin/putidaredoxin family. Requires [2Fe-2S] cluster as cofactor.

Its subcellular location is the mitochondrion. Functionally, associates with the adrenodoxin reductase MFDR to form an efficient low potential electron transfer chain that is able to reduce cytochrome C. This is Adrenodoxin-like protein 2, mitochondrial from Arabidopsis thaliana (Mouse-ear cress).